Consider the following 120-residue polypeptide: UPF0102 protein FRAAL5785 (120 aa).

The protein belongs to the UPF0102 family.

The chain is UPF0102 protein FRAAL5785 from Frankia alni (strain DSM 45986 / CECT 9034 / ACN14a).